The sequence spans 897 residues: F-BAR domain only protein 1 (897 aa).

The tract at residues Met1–Leu276 is mediates membrane-binding. The F-BAR domain occupies Ile2–Leu248. Positions Leu134 to Glu154 form a coiled coil. Positions Val475–Asn537 are disordered. The segment covering Pro501 to Gly520 has biased composition (polar residues). An MHD domain is found at Ser630–Gly894.

Belongs to the FCHO family. In terms of assembly, may oligomerize and form homotetramer. Interacts with acvr1l/alk8; linking this receptor to clathrin-mediated endocytosis.

The protein localises to the membrane. It localises to the clathrin-coated pit. Functionally, may function in an early step of clathrin-mediated endocytosis. May regulate Bmp signaling by regulating clathrin-mediated endocytosis of Bmp receptors. The protein is F-BAR domain only protein 1 (fcho1) of Danio rerio (Zebrafish).